A 210-amino-acid polypeptide reads, in one-letter code: Large ribosomal subunit protein uL4 (210 aa).

Polar residues predominate over residues 44-54 (QRQGTASTLTR). Positions 44–96 (QRQGTASTLTRSEVRGGGRKPYKQKGTGRARQGSIRTPLRPGGGVIFGPKPRS) are disordered. The segment covering 60 to 71 (GGRKPYKQKGTG) has biased composition (basic residues).

This sequence belongs to the universal ribosomal protein uL4 family. In terms of assembly, part of the 50S ribosomal subunit.

One of the primary rRNA binding proteins, this protein initially binds near the 5'-end of the 23S rRNA. It is important during the early stages of 50S assembly. It makes multiple contacts with different domains of the 23S rRNA in the assembled 50S subunit and ribosome. Its function is as follows. Forms part of the polypeptide exit tunnel. This chain is Large ribosomal subunit protein uL4, found in Prochlorococcus marinus (strain MIT 9515).